Here is a 412-residue protein sequence, read N- to C-terminus: MERIPSAQPPPACLPKAPGLEHGDLPGMYPAHMYQVYKSRRGIKRSEDSKETYKLPHRLIEKKRRDRINECIAQLKDLLPEHLKLTTLGHLEKAVVLELTLKHVKALTNLIDQQQQKIIALQSGLQAGELSGRNVETGQEMFCSGFQTCAREVLQYLAKHENTRDLKSSQLVTHLHRVVSELLQGGTSRKSSDPAPKVMDFKEKPSSPAKGSEGPGKNCVPVIQRTFAHSSGEQSGSDTDTDSGYGGESEKGDLRSEQLCFKSDHGRRFTMGERIGAIKQESEEPPTKKNRMQLSDDEGHFTSSDLISSPFLGPHPHQPPFCLPFYLIPPSATAYLPMLEKCWYPTSVPVLYPGLNASAAALSSFMNPDKISAPLLMPQRLPSPLPAHPSVDSSVLLQALKPIPPLNLETKD.

The interval 1–139 (MERIPSAQPP…LSGRNVETGQ (139 aa)) is essential for interaction with BMAL1, E-box binding and repressor activity against the CLOCK-BMAL1 heterodimer. The bHLH domain maps to 52–107 (TYKLPHRLIEKKRRDRINECIAQLKDLLPEHLKLTTLGHLEKAVVLELTLKHVKAL). The interval 75–79 (LKDLL) is necessary for interaction with RXRA and repressor activity against RXRA. One can recognise an Orange domain in the interval 142-175 (FCSGFQTCAREVLQYLAKHENTRDLKSSQLVTHL). Residue K159 forms a Glycyl lysine isopeptide (Lys-Gly) (interchain with G-Cter in SUMO1, SUMO2 and SUMO3) linkage. A Glycyl lysine isopeptide (Lys-Gly) (interchain with G-Cter in SUMO2) cross-link involves residue K167. 2 disordered regions span residues 183–259 (LQGG…SEQL) and 275–309 (IGAI…LISS). S235 is modified (phosphoserine). Positions 248 to 259 (ESEKGDLRSEQL) are enriched in basic and acidic residues. K279 is covalently cross-linked (Glycyl lysine isopeptide (Lys-Gly) (interchain with G-Cter in SUMO1); alternate). K279 is covalently cross-linked (Glycyl lysine isopeptide (Lys-Gly) (interchain with G-Cter in SUMO1, SUMO2 and SUMO3); alternate). A Glycyl lysine isopeptide (Lys-Gly) (interchain with G-Cter in SUMO2); alternate cross-link involves residue K279. Residue K288 forms a Glycyl lysine isopeptide (Lys-Gly) (interchain with G-Cter in SUMO2) linkage. S383 is modified (phosphoserine).

Homodimer. Heterodimer with BHLHE41/DEC2. Interacts with TCF3/E47. Interacts with ubiquitin-conjugating enzyme UBE2I/UBC9. Interacts with HDAC1, SUMO1, RXRA and BMAL1. Ubiquitinated; which may lead to proteasomal degradation. Post-translationally, sumoylation inhibits its ubiquitination and promotes its negative regulation of the CLOCK-BMAL1 heterodimer transcriptional activator activity.

The protein localises to the cytoplasm. Its subcellular location is the nucleus. Transcriptional repressor involved in the regulation of the circadian rhythm by negatively regulating the activity of the clock genes and clock-controlled genes. Acts as the negative limb of a novel autoregulatory feedback loop (DEC loop) which differs from the one formed by the PER and CRY transcriptional repressors (PER/CRY loop). Both these loops are interlocked as it represses the expression of PER1/2 and in turn is repressed by PER1/2 and CRY1/2. Represses the activity of the circadian transcriptional activator: CLOCK-BMAL1|BMAL2 heterodimer by competing for the binding to E-box elements (5'-CACGTG-3') found within the promoters of its target genes. Negatively regulates its own expression and the expression of DBP and BHLHE41/DEC2. Acts as a corepressor of RXR and the RXR-LXR heterodimers and represses the ligand-induced RXRA and NR1H3/LXRA transactivation activity. May be involved in the regulation of chondrocyte differentiation via the cAMP pathway. Represses the transcription of NR0B2 and attentuates the transactivation of NR0B2 by the CLOCK-BMAL1 complex. Drives the circadian rhythm of blood pressure through transcriptional repression of ATP1B1 in the cardiovascular system. This Pongo abelii (Sumatran orangutan) protein is Class E basic helix-loop-helix protein 40 (BHLHE40).